We begin with the raw amino-acid sequence, 78 residues long: Large ribosomal subunit protein bL28 (78 aa).

Residues 1 to 26 are disordered; the sequence is MSAYCQVTGRKPSFGKSVSHSHRRTN.

It belongs to the bacterial ribosomal protein bL28 family.

This is Large ribosomal subunit protein bL28 from Corynebacterium jeikeium (strain K411).